A 278-amino-acid polypeptide reads, in one-letter code: Formamidopyrimidine-DNA glycosylase (278 aa).

The active-site Schiff-base intermediate with DNA is Pro2. The active-site Proton donor is the Glu3. The active-site Proton donor; for beta-elimination activity is Lys59. DNA-binding residues include His93, Arg112, and Arg153. The FPG-type zinc finger occupies 238–272; it reads NVYDRAGEPCPRCQSTIERIVVAQRSTYFCPTCQI. The Proton donor; for delta-elimination activity role is filled by Arg262.

It belongs to the FPG family. As to quaternary structure, monomer. Requires Zn(2+) as cofactor.

The catalysed reaction is Hydrolysis of DNA containing ring-opened 7-methylguanine residues, releasing 2,6-diamino-4-hydroxy-5-(N-methyl)formamidopyrimidine.. The enzyme catalyses 2'-deoxyribonucleotide-(2'-deoxyribose 5'-phosphate)-2'-deoxyribonucleotide-DNA = a 3'-end 2'-deoxyribonucleotide-(2,3-dehydro-2,3-deoxyribose 5'-phosphate)-DNA + a 5'-end 5'-phospho-2'-deoxyribonucleoside-DNA + H(+). Its function is as follows. Involved in base excision repair of DNA damaged by oxidation or by mutagenic agents. Acts as a DNA glycosylase that recognizes and removes damaged bases. Has a preference for oxidized purines, such as 7,8-dihydro-8-oxoguanine (8-oxoG). Has AP (apurinic/apyrimidinic) lyase activity and introduces nicks in the DNA strand. Cleaves the DNA backbone by beta-delta elimination to generate a single-strand break at the site of the removed base with both 3'- and 5'-phosphates. This Chloroflexus aurantiacus (strain ATCC 29366 / DSM 635 / J-10-fl) protein is Formamidopyrimidine-DNA glycosylase.